The sequence spans 371 residues: MTDPAVTPLAFSIPQLYCPFPTAIHPEVDTLTRAGMDFMTHHGFCNTEADRLVVANIDAGAIVARWYPNPDFPVDRLQMVTDFLYLYFLIDDLRFEVINSDTGLAGPIALFAQHLDLWEYPQAHRREELDLFHQAIHDLASRMAELTTPTKAARMRRSINGWFLALLREIALFNDDHAVMAEEYLPIRVVTVASRLMIDVNGFICPAEVPGDEWYSLKVQAAAEAAMSVCLYDNELYSAGKEQWLKSRATAHDRRPRNLVALIQAQTGGSTEHALQEVAEYRNRTVCLYLNLRSQLEKTASPALLAYLSVLDGVISGNLDAHATSSRYHNPDGHHPHAIAFTPLRTTDECSARAHTPIAPPIAWWWEQLDQ.

Asparagine 234, serine 238, and glutamate 242 together coordinate Mg(2+).

This sequence belongs to the terpene synthase family. Homodimer. Mg(2+) is required as a cofactor.

The enzyme catalyses (2E,6E,10E)-geranylgeranyl diphosphate = cembrene C + diphosphate. It carries out the reaction (2E,6E,10E)-geranylgeranyl diphosphate + H2O = (R)-nephthenol + diphosphate. In terms of biological role, diterpene cyclases that can form multiple diterpene products. This is Diterpene cyclase DtcycA from Streptomyces sp.